A 197-amino-acid chain; its full sequence is Ribonuclease HII (197 aa).

The 189-residue stretch at 9-197 folds into the RNase H type-2 domain; sequence KLIAGVDEVG…APVKKALEQF (189 aa). Positions 15, 16, and 107 each coordinate a divalent metal cation.

It belongs to the RNase HII family. Mn(2+) serves as cofactor. Mg(2+) is required as a cofactor.

Its subcellular location is the cytoplasm. The catalysed reaction is Endonucleolytic cleavage to 5'-phosphomonoester.. Endonuclease that specifically degrades the RNA of RNA-DNA hybrids. This Haemophilus influenzae (strain PittEE) protein is Ribonuclease HII.